Here is a 323-residue protein sequence, read N- to C-terminus: Aldo-keto reductase family 1 member C1 (323 aa).

NADP(+)-binding positions include 20-24 (GFGTY) and aspartate 50. Tyrosine 24 contacts substrate. Tyrosine 55 serves as the catalytic Proton donor. Histidine 117 serves as a coordination point for substrate. NADP(+) is bound by residues 166–167 (SN), glutamine 190, and 216–222 (YSALGSH). Substrate-binding residues include histidine 222 and tryptophan 227. 270-280 (KSYNEQRIRQN) provides a ligand contact to NADP(+).

This sequence belongs to the aldo/keto reductase family. In terms of assembly, monomer. Expressed in all tissues tested including liver, prostate, testis, adrenal gland, brain, uterus, mammary gland and keratinocytes. Highest levels found in liver, mammary gland and brain.

It is found in the cytoplasm. It localises to the cytosol. The catalysed reaction is a 3alpha-hydroxysteroid + NADP(+) = a 3-oxosteroid + NADPH + H(+). The enzyme catalyses a 3alpha-hydroxysteroid + NAD(+) = a 3-oxosteroid + NADH + H(+). It catalyses the reaction (17R,20S)-17,20-dihydroxypregn-4-en-3-one + NADP(+) = 17alpha-hydroxyprogesterone + NADPH + H(+). It carries out the reaction (17R,20S)-17,20-dihydroxypregn-4-en-3-one + NAD(+) = 17alpha-hydroxyprogesterone + NADH + H(+). The catalysed reaction is (20S)-hydroxypregn-4-en-3-one + NADP(+) = progesterone + NADPH + H(+). The enzyme catalyses (20S)-hydroxypregn-4-en-3-one + NAD(+) = progesterone + NADH + H(+). It catalyses the reaction (1R,2R)-1,2-dihydrobenzene-1,2-diol + NADP(+) = catechol + NADPH + H(+). It carries out the reaction (S)-indan-1-ol + NAD(+) = indan-1-one + NADH + H(+). The catalysed reaction is (S)-indan-1-ol + NADP(+) = indan-1-one + NADPH + H(+). The enzyme catalyses 5alpha-androstane-3alpha,17beta-diol + NADP(+) = 17beta-hydroxy-5alpha-androstan-3-one + NADPH + H(+). It catalyses the reaction 5alpha-androstane-3beta,17beta-diol + NADP(+) = 17beta-hydroxy-5alpha-androstan-3-one + NADPH + H(+). It carries out the reaction 5alpha-androstane-3alpha,17beta-diol + NAD(+) = 17beta-hydroxy-5alpha-androstan-3-one + NADH + H(+). The catalysed reaction is 17beta-hydroxy-5alpha-androstan-3-one + NADP(+) = 5alpha-androstan-3,17-dione + NADPH + H(+). The enzyme catalyses androsterone + NADP(+) = 5alpha-androstan-3,17-dione + NADPH + H(+). It catalyses the reaction androsterone + NADPH + H(+) = 5alpha-androstane-3alpha,17beta-diol + NADP(+). It carries out the reaction 5alpha-androstane-3alpha,17beta-diol + NAD(+) = androsterone + NADH + H(+). The catalysed reaction is 17beta-estradiol + NADP(+) = estrone + NADPH + H(+). The enzyme catalyses 17beta-estradiol + NAD(+) = estrone + NADH + H(+). It catalyses the reaction testosterone + NADP(+) = androst-4-ene-3,17-dione + NADPH + H(+). It carries out the reaction 20alpha-hydroxy-5beta-pregnan-3-one + NADP(+) = 5beta-pregnan-3,20-dione + NADPH + H(+). The catalysed reaction is 3beta-hydroxy-5beta-pregnane-20-one + NADP(+) = 5beta-pregnan-3,20-dione + NADPH + H(+). The enzyme catalyses 3beta-hydroxy-5beta-pregnane-20-one + NADPH + H(+) = 3beta,20alpha-dihydroxy-5beta-pregnane + NADP(+). It catalyses the reaction (3beta,5alpha,17beta)-3-hydroxyandrostan-17-yl sulfate + NADP(+) = 5alpha-dihydrotestosterone sulfate + NADPH + H(+). It participates in steroid metabolism. With respect to regulation, inhibited by hexestrol with an IC(50) of 9.5 uM, 1,10-phenanthroline with an IC(50) of 55 uM, 1,7-phenanthroline with an IC(50) of 72 uM, flufenamic acid with an IC(50) of 6.0 uM, indomethacin with an IC(50) of 140 uM, ibuprofen with an IC(50) of 950 uM, lithocholic acid with an IC(50) of 25 uM, ursodeoxycholic acid with an IC(50) of 340 uM and chenodeoxycholic acid with an IC(50) of 570 uM. The oxidation reaction is inhibited by low micromolar concentrations of NADPH. Functionally, cytosolic aldo-keto reductase that catalyzes the NADH and NADPH-dependent reduction of ketosteroids to hydroxysteroids. Most probably acts as a reductase in vivo since the oxidase activity measured in vitro is inhibited by physiological concentrations of NADPH. Displays a broad positional specificity acting on positions 3, 17 and 20 of steroids and regulates the metabolism of hormones like estrogens and androgens. May also reduce conjugated steroids such as 5alpha-dihydrotestosterone sulfate. Displays affinity for bile acids. In Homo sapiens (Human), this protein is Aldo-keto reductase family 1 member C1 (AKR1C1).